The chain runs to 1989 residues: Exophilin-5 (1989 aa).

The RabBD domain maps to 7–63 (AFDFSFLNDEEARKILQVLERNEELQRAEKDRISKLQKTKRDIRWLQGVTGEWFEEI). 2 disordered regions span residues 93–117 (NDPI…PFSS) and 348–391 (TQSK…FLRA). Polar residues-rich tracts occupy residues 100-111 (TSRSKNVTNQKK) and 359-376 (HQQS…WNRS). Positions 377 to 389 (DSSRDRENQEEFL) are enriched in basic and acidic residues. Position 603 is a phosphoserine (Ser603). Disordered stretches follow at residues 631–651 (FSQI…NPTV), 806–827 (STAS…RTDQ), and 882–933 (AALP…NQKN). Over residues 641 to 651 (PQSPNLQNPTV) the composition is skewed to polar residues. Phosphoserine is present on residues Ser806 and Ser809. Positions 891-909 (KNSSLDAPVVPSTTVFSRR) are enriched in polar residues. A compositionally biased stretch (basic and acidic residues) spans 910–927 (SPSDKDPSLGEREEKDNA). Phosphoserine occurs at positions 1028 and 1086. Disordered regions lie at residues 1094–1113 (EATE…VRKG), 1124–1152 (SCPS…ASEL), and 1365–1493 (EIFS…TNCQ). Residues 1098 to 1110 (RMTNVKSSGSTSV) are compositionally biased toward polar residues. Ser1124 carries the post-translational modification Phosphoserine. Residues 1379 to 1390 (SENKKERGKKLQ) are compositionally biased toward basic and acidic residues. The span at 1416-1431 (SINSSNSGPSSLPALS) shows a compositional bias: low complexity. Positions 1434-1447 (NIGNSQTRRSSWEC) are enriched in polar residues. Phosphoserine is present on Ser1505. 2 disordered regions span residues 1521 to 1590 (EETQ…NRSS) and 1644 to 1737 (PEPT…PITF). Basic and acidic residues-rich tracts occupy residues 1551–1560 (ESRKAEDEMQ), 1573–1589 (NKNK…ENRS), and 1658–1670 (RLSE…KKSE). Over residues 1685–1709 (THVSNQKSNSISQRHQNEFKNVSES) the composition is skewed to polar residues. 4 positions are modified to phosphoserine: Ser1753, Ser1768, Ser1821, and Ser1851. The disordered stretch occupies residues 1921 to 1989 (FLKDDLRNPP…LDENDKESEL (69 aa)). Low complexity predominate over residues 1933 to 1943 (SESLSSNSPSS). The segment covering 1959-1989 (YEDDPVDSDCDTDTTTDDEYYLDENDKESEL) has biased composition (acidic residues).

As to quaternary structure, interacts with RAB27A. In terms of tissue distribution, expressed in keratinocytes.

In terms of biological role, may act as Rab effector protein and play a role in vesicle trafficking. The chain is Exophilin-5 from Homo sapiens (Human).